Reading from the N-terminus, the 376-residue chain is MAKRDFYEVLGVERGASEAELKKAYRRLAMKHHPDRNPGDKAAEEAFKEANEAYEVLSDPSKRAAYDQYGHAGVDPQMGAGAGGAGYGGANFSDIFGDVFSDFFSGGRGGSRGGAQRGSDLRYTLELDLEEAVRGTTVTIRVPTLVECKTCDGSGAKKGTSPVTCTTCGGIGQVRMQQGFFSVQQTCPRCHGSGKMISDPCGSCHGQGRVEEQKTLSVKVPPGVDTGDRIRLSGEGEAGTQGGPAGDLYVVVNVREHAIFQRDGKHLYCEVPISFADAALGGELEVPTLDGRVKLKIPEGTQTGKQFRLRGKGVAPVRGGAAGDLMCRVVVETPVNLSKRQREMLEEFRGTLQGDTSHSPKASGWFEGVKRFFGDV.

One can recognise a J domain in the interval 5–70; sequence DFYEVLGVER…SKRAAYDQYG (66 aa). A CR-type zinc finger spans residues 135–213; the sequence is GTTVTIRVPT…CHGQGRVEEQ (79 aa). 8 residues coordinate Zn(2+): Cys-148, Cys-151, Cys-165, Cys-168, Cys-187, Cys-190, Cys-201, and Cys-204. CXXCXGXG motif repeat units lie at residues 148–155, 165–172, 187–194, and 201–208; these read CKTCDGSG, CTTCGGIG, CPRCHGSG, and CGSCHGQG.

Belongs to the DnaJ family. In terms of assembly, homodimer. The cofactor is Zn(2+).

It is found in the cytoplasm. Its function is as follows. Participates actively in the response to hyperosmotic and heat shock by preventing the aggregation of stress-denatured proteins and by disaggregating proteins, also in an autonomous, DnaK-independent fashion. Unfolded proteins bind initially to DnaJ; upon interaction with the DnaJ-bound protein, DnaK hydrolyzes its bound ATP, resulting in the formation of a stable complex. GrpE releases ADP from DnaK; ATP binding to DnaK triggers the release of the substrate protein, thus completing the reaction cycle. Several rounds of ATP-dependent interactions between DnaJ, DnaK and GrpE are required for fully efficient folding. Also involved, together with DnaK and GrpE, in the DNA replication of plasmids through activation of initiation proteins. This chain is Chaperone protein DnaJ, found in Stutzerimonas stutzeri (Pseudomonas stutzeri).